The sequence spans 135 residues: MVDFKVVLSDPATGKAYNIDASGAGAGSFIGKRIGEEIDGAALGFDGYKIRITGASDRNGTPARKTLQIAGRRKVLMAGGVGFHPRVDGERRRKMVRGAEITQDFVQINAIVATQGSKTLAEYFAPAEPEAPAAE.

Belongs to the eukaryotic ribosomal protein eS6 family.

The polypeptide is Small ribosomal subunit protein eS6 (Methanospirillum hungatei JF-1 (strain ATCC 27890 / DSM 864 / NBRC 100397 / JF-1)).